The following is a 62-amino-acid chain: Large ribosomal subunit protein bL32 (62 aa).

Residues 1–18 (MGVPKKRTSKMRRDRRRA) show a composition bias toward basic residues. Residues 1–22 (MGVPKKRTSKMRRDRRRAANNN) are disordered.

Belongs to the bacterial ribosomal protein bL32 family.

This is Large ribosomal subunit protein bL32 from Myxococcus xanthus (strain DK1622).